Reading from the N-terminus, the 423-residue chain is Mannose-6-phosphate isomerase (423 aa).

A2 carries the post-translational modification N-acetylalanine. 2 positions are modified to phosphoserine: S102 and S108. The Zn(2+) site is built by Q110, H112, E137, and H276. The active site involves R295.

The protein belongs to the mannose-6-phosphate isomerase type 1 family. It depends on Zn(2+) as a cofactor. In terms of tissue distribution, expressed in all tissues, but more abundant in testis.

It localises to the cytoplasm. It carries out the reaction D-mannose 6-phosphate = D-fructose 6-phosphate. It participates in nucleotide-sugar biosynthesis; GDP-alpha-D-mannose biosynthesis; alpha-D-mannose 1-phosphate from D-fructose 6-phosphate: step 1/2. In terms of biological role, isomerase that catalyzes the interconversion of fructose-6-P and mannose-6-P and has a critical role in the supply of D-mannose derivatives required for many eukaryotic glycosylation reactions. In Mus musculus (Mouse), this protein is Mannose-6-phosphate isomerase.